The following is a 378-amino-acid chain: Acyl-coenzyme A diphosphatase NUDT19 (378 aa).

The Nudix hydrolase domain occupies 7–258; the sequence is HWREAASVLL…EIWLAPPQFY (252 aa). The Nudix box motif lies at 105–126; the sequence is SPLPGEVAFRICAIRETFEEAG. Glu-120 and Glu-124 together coordinate Mg(2+). The short motif at 376 to 378 is the Microbody targeting signal element; the sequence is SRL.

It belongs to the Nudix hydrolase family. In terms of assembly, monomer. Mg(2+) is required as a cofactor. It depends on Mn(2+) as a cofactor.

The protein resides in the peroxisome. It catalyses the reaction an acyl-CoA + H2O = an acyl-4'-phosphopantetheine + adenosine 3',5'-bisphosphate + 2 H(+). The catalysed reaction is CoA + H2O = (R)-4'-phosphopantetheine + adenosine 3',5'-bisphosphate + 2 H(+). The enzyme catalyses hexanoyl-CoA + H2O = hexanoyl-4'-phosphopantetheine + adenosine 3',5'-bisphosphate + 2 H(+). It carries out the reaction octanoyl-CoA + H2O = S-octanoyl-4'-phosphopantetheine + adenosine 3',5'-bisphosphate + 2 H(+). It catalyses the reaction butanoyl-CoA + H2O = S-butanoyl-4'-phosphopantetheine + adenosine 3',5'-bisphosphate + 2 H(+). The catalysed reaction is propanoyl-CoA + H2O = propanoyl-4'-phosphopantetheine + adenosine 3',5'-bisphosphate + 2 H(+). The enzyme catalyses malonyl-CoA + H2O = malonyl-4'-phosphopantetheine + adenosine 3',5'-bisphosphate + 2 H(+). It carries out the reaction succinyl-CoA + H2O = succinyl-4'-phosphopantetheine + adenosine 3',5'-bisphosphate + 2 H(+). It catalyses the reaction choloyl-CoA + H2O = S-choloyl-4'-phosphopantetheine + adenosine 3',5'-bisphosphate + 2 H(+). The catalysed reaction is 4,8-dimethylnonanoyl-CoA + H2O = S-(4,8-dimethylnonanoyl)-4'-phosphopantetheine + adenosine 3',5'-bisphosphate + 2 H(+). The enzyme catalyses (9Z,12Z,15Z)-octadecatrienoyl-CoA + H2O = S-(9Z,12Z,15Z-octadecatrienoyl)-4'-phosphopantetheine + adenosine 3',5'-bisphosphate + 2 H(+). It carries out the reaction (9Z,12Z)-octadecadienoyl-CoA + H2O = S-(9Z,12Z-octadecadienoyl)-4'-phosphopantetheine + adenosine 3',5'-bisphosphate + 2 H(+). It catalyses the reaction (9Z)-hexadecenoyl-CoA + H2O = S-(9Z-hexadecenoyl)-4'-phosphopantetheine + adenosine 3',5'-bisphosphate + 2 H(+). The catalysed reaction is (9Z)-tetradecenoyl-CoA + H2O = S-(9Z-tetradecenoyl)-4'-phosphopantetheine + adenosine 3',5'-bisphosphate + 2 H(+). The enzyme catalyses (6Z)-octenoyl-CoA + H2O = S-(6Z-octenoyl)-4'-phosphopantetheine + adenosine 3',5'-bisphosphate + 2 H(+). It carries out the reaction hexadecanoyl-CoA + H2O = S-hexadecanoyl-4'-phosphopantetheine + adenosine 3',5'-bisphosphate + 2 H(+). It catalyses the reaction tetradecanoyl-CoA + H2O = tetradecanoyl-4'-phosphopantetheine + adenosine 3',5'-bisphosphate + 2 H(+). The catalysed reaction is dodecanoyl-CoA + H2O = S-dodecanoyl-4'-phosphopantetheine + adenosine 3',5'-bisphosphate + 2 H(+). The enzyme catalyses a 5'-end CoA-ribonucleoside in mRNA + H2O = a 5'-end phospho-adenosine-phospho-ribonucleoside in mRNA + (R)-4'-phosphopantetheine + 2 H(+). Fatty acyl-coenzyme A (CoA) diphosphatase that hydrolyzes fatty acyl-CoA to yield acyl-4'-phosphopantetheine and adenosine 3',5'-bisphosphate. Mediates the hydrolysis of a wide range of CoA esters, including choloyl-CoA and branched-chain fatty-acyl-CoA esters and at low substrate concentrations medium and long-chain fatty-acyl-CoA esters are the primary substrates. Highest activity seen with medium-chain acyl-CoA esters and higher rates of activity seen with the unsaturated acyl-CoA esters compared with the saturated esters. Exhibits decapping activity towards dpCoA-capped RNAs in vitro. This Gallus gallus (Chicken) protein is Acyl-coenzyme A diphosphatase NUDT19 (NUDT19).